A 288-amino-acid polypeptide reads, in one-letter code: Protoheme IX farnesyltransferase (288 aa).

9 helical membrane passes run 8 to 28, 35 to 55, 80 to 100, 107 to 127, 132 to 152, 162 to 182, 208 to 228, 229 to 249, and 266 to 286; these read ATKP…FLLA, YLIF…GCVL, ISIL…IYLL, LTML…TKCM, IYST…GYCA, LLLL…IAIL, IVIY…SGYT, TSYQ…YLAL, and FIFS…DSIF.

The protein belongs to the UbiA prenyltransferase family. Protoheme IX farnesyltransferase subfamily.

The protein resides in the cell membrane. The enzyme catalyses heme b + (2E,6E)-farnesyl diphosphate + H2O = Fe(II)-heme o + diphosphate. It functions in the pathway porphyrin-containing compound metabolism; heme O biosynthesis; heme O from protoheme: step 1/1. Its function is as follows. Converts heme B (protoheme IX) to heme O by substitution of the vinyl group on carbon 2 of heme B porphyrin ring with a hydroxyethyl farnesyl side group. This chain is Protoheme IX farnesyltransferase, found in Baumannia cicadellinicola subsp. Homalodisca coagulata.